Consider the following 520-residue polypeptide: Cholesterol side-chain cleavage enzyme, mitochondrial (520 aa).

The N-terminal 39 residues, 1-39 (MLVRGLPLRSVLVKGCQPLLSAPREGPGHPRVPTGEGAG), are a transit peptide targeting the mitochondrion. A disordered region spans residues 19–47 (LLSAPREGPGHPRVPTGEGAGMSSHSPRP). Cys461 serves as a coordination point for heme.

Belongs to the cytochrome P450 family. In terms of assembly, interacts with FDX1/adrenodoxin. Heme is required as a cofactor.

It localises to the mitochondrion inner membrane. The enzyme catalyses 6 reduced [adrenodoxin] + cholesterol + 3 O2 + 6 H(+) = 4-methylpentanal + pregnenolone + 6 oxidized [adrenodoxin] + 4 H2O. It carries out the reaction 2 reduced [adrenodoxin] + cholesterol + O2 + 2 H(+) = (22R)-hydroxycholesterol + 2 oxidized [adrenodoxin] + H2O. It catalyses the reaction (22R)-hydroxycholesterol + 2 reduced [adrenodoxin] + O2 + 2 H(+) = (20R,22R)-20,22-dihydroxycholesterol + 2 oxidized [adrenodoxin] + H2O. The catalysed reaction is (20R,22R)-20,22-dihydroxycholesterol + 2 reduced [adrenodoxin] + O2 + 2 H(+) = 4-methylpentanal + pregnenolone + 2 oxidized [adrenodoxin] + 2 H2O. It participates in lipid metabolism; C21-steroid hormone metabolism. The protein operates within steroid metabolism; cholesterol metabolism. Its function is as follows. A cytochrome P450 monooxygenase that catalyzes the side-chain hydroxylation and cleavage of cholesterol to pregnenolone, the precursor of most steroid hormones. Catalyzes three sequential oxidation reactions of cholesterol, namely the hydroxylation at C22 followed with the hydroxylation at C20 to yield 20R,22R-hydroxycholesterol that is further cleaved between C20 and C22 to yield the C21-steroid pregnenolone and 4-methylpentanal. Mechanistically, uses molecular oxygen inserting one oxygen atom into a substrate and reducing the second into a water molecule. Two electrons are provided by NADPH via a two-protein mitochondrial transfer system comprising flavoprotein FDXR (adrenodoxin/ferredoxin reductase) and nonheme iron-sulfur protein FDX1 or FDX2 (adrenodoxin/ferredoxin). The sequence is that of Cholesterol side-chain cleavage enzyme, mitochondrial (CYP11A1) from Equus caballus (Horse).